The following is an 88-amino-acid chain: Acyl-CoA-binding domain-containing protein 7 (88 aa).

In terms of domain architecture, ACB spans 3–88 (LQADFDRAAE…AKELIEKYGI (86 aa)). An acyl-CoA contacts are provided by residues Arg-15, 30-34 (YGLYK), Lys-56, and Tyr-75.

This sequence belongs to the ACBD7 family.

Its function is as follows. Binds medium- and long-chain acyl-CoA esters. The chain is Acyl-CoA-binding domain-containing protein 7 (ACBD7) from Homo sapiens (Human).